The chain runs to 491 residues: UDP-N-acetylmuramate--L-alanine ligase (491 aa).

126–132 (GTHGKTT) is an ATP binding site.

It belongs to the MurCDEF family.

It is found in the cytoplasm. It carries out the reaction UDP-N-acetyl-alpha-D-muramate + L-alanine + ATP = UDP-N-acetyl-alpha-D-muramoyl-L-alanine + ADP + phosphate + H(+). The protein operates within cell wall biogenesis; peptidoglycan biosynthesis. Its function is as follows. Cell wall formation. The polypeptide is UDP-N-acetylmuramate--L-alanine ligase (Salmonella gallinarum (strain 287/91 / NCTC 13346)).